Reading from the N-terminus, the 356-residue chain is Surface presentation of antigens protein SpaS (356 aa).

5 helical membrane-spanning segments follow: residues leucine 29–asparagine 49, leucine 72–cysteine 92, valine 132–cysteine 152, leucine 179–isoleucine 199, and histidine 261–tyrosine 281.

It belongs to the type III secretion exporter family.

The protein resides in the cell inner membrane. Functionally, involved in a secretory pathway responsible for the surface presentation of determinants needed for the entry of Salmonella species into mammalian cells. This is Surface presentation of antigens protein SpaS (spaS) from Salmonella typhimurium (strain LT2 / SGSC1412 / ATCC 700720).